The following is a 478-amino-acid chain: Ribulose bisphosphate carboxylase large chain (478 aa).

Positions 1–2 (MS) are excised as a propeptide. N-acetylproline is present on proline 3. At lysine 14 the chain carries N6,N6,N6-trimethyllysine. Asparagine 123 and threonine 173 together coordinate substrate. Lysine 175 functions as the Proton acceptor in the catalytic mechanism. Lysine 177 provides a ligand contact to substrate. Residues lysine 201, aspartate 203, and glutamate 204 each coordinate Mg(2+). Position 201 is an N6-carboxylysine (lysine 201). The Proton acceptor role is filled by histidine 294. Substrate contacts are provided by arginine 295, histidine 327, and serine 379.

This sequence belongs to the RuBisCO large chain family. Type I subfamily. Heterohexadecamer of 8 large chains and 8 small chains; disulfide-linked. The disulfide link is formed within the large subunit homodimers. Mg(2+) serves as cofactor. The disulfide bond which can form in the large chain dimeric partners within the hexadecamer appears to be associated with oxidative stress and protein turnover.

The protein localises to the plastid. It localises to the chloroplast. It catalyses the reaction 2 (2R)-3-phosphoglycerate + 2 H(+) = D-ribulose 1,5-bisphosphate + CO2 + H2O. The catalysed reaction is D-ribulose 1,5-bisphosphate + O2 = 2-phosphoglycolate + (2R)-3-phosphoglycerate + 2 H(+). Its function is as follows. RuBisCO catalyzes two reactions: the carboxylation of D-ribulose 1,5-bisphosphate, the primary event in carbon dioxide fixation, as well as the oxidative fragmentation of the pentose substrate in the photorespiration process. Both reactions occur simultaneously and in competition at the same active site. In Neurachne tenuifolia, this protein is Ribulose bisphosphate carboxylase large chain.